A 509-amino-acid polypeptide reads, in one-letter code: Probable DNA ligase (509 aa).

Residue D218 coordinates ATP. Residue K220 is the N6-AMP-lysine intermediate of the active site. 6 residues coordinate ATP: R225, R240, E269, F302, R374, and K380.

The protein belongs to the ATP-dependent DNA ligase family. The cofactor is Mg(2+).

The catalysed reaction is ATP + (deoxyribonucleotide)n-3'-hydroxyl + 5'-phospho-(deoxyribonucleotide)m = (deoxyribonucleotide)n+m + AMP + diphosphate.. Functionally, DNA ligase that seals nicks in double-stranded DNA during DNA replication, DNA recombination and DNA repair. This Nocardioides sp. (strain ATCC BAA-499 / JS614) protein is Probable DNA ligase.